Reading from the N-terminus, the 448-residue chain is Signal recognition particle 54 kDa protein (448 aa).

Residues 107 to 114 (GIQGSGKT), 189 to 193 (DTAGR), and 247 to 250 (TKLD) each bind GTP.

The protein belongs to the GTP-binding SRP family. SRP54 subfamily. In terms of assembly, part of the signal recognition particle protein translocation system, which is composed of SRP and FtsY. Archaeal SRP consists of a 7S RNA molecule of 300 nucleotides and two protein subunits: SRP54 and SRP19.

The protein localises to the cytoplasm. It catalyses the reaction GTP + H2O = GDP + phosphate + H(+). Functionally, involved in targeting and insertion of nascent membrane proteins into the cytoplasmic membrane. Binds to the hydrophobic signal sequence of the ribosome-nascent chain (RNC) as it emerges from the ribosomes. The SRP-RNC complex is then targeted to the cytoplasmic membrane where it interacts with the SRP receptor FtsY. In Thermococcus gammatolerans (strain DSM 15229 / JCM 11827 / EJ3), this protein is Signal recognition particle 54 kDa protein.